The sequence spans 490 residues: ATP synthase subunit beta, chloroplastic (490 aa).

An ATP-binding site is contributed by 170-177 (GGAGVGKT).

Belongs to the ATPase alpha/beta chains family. In terms of assembly, F-type ATPases have 2 components, CF(1) - the catalytic core - and CF(0) - the membrane proton channel. CF(1) has five subunits: alpha(3), beta(3), gamma(1), delta(1), epsilon(1). CF(0) has four main subunits: a(1), b(1), b'(1) and c(9-12).

It is found in the plastid. The protein localises to the chloroplast thylakoid membrane. The enzyme catalyses ATP + H2O + 4 H(+)(in) = ADP + phosphate + 5 H(+)(out). Functionally, produces ATP from ADP in the presence of a proton gradient across the membrane. The catalytic sites are hosted primarily by the beta subunits. The protein is ATP synthase subunit beta, chloroplastic of Convolvulus arvensis (Field bindweed).